The sequence spans 343 residues: Mitochondrial amidoxime-reducing component 1 (343 aa).

Residues 1 to 25 are Mitochondrial matrix-facing; sequence MSNTVFSGAVGPLRAAALSISRHRL. The helical; Signal-anchor for type II membrane protein transmembrane segment at 26–44 threads the bilayer; that stretch reads PLLCAAGLGLTAVASWMWW. At 45–343 the chain is on the cytoplasmic side; that stretch reads RKRQGEAEDL…DPVYRVTRKG (299 aa). Positions 69, 70, and 94 each coordinate Mo-molybdopterin. Positions 95–186 are MOSC N-terminal region; that stretch reads HWLVVTEEGN…SSQPYRLVHF (92 aa). An MOSC domain is found at 181 to 339; the sequence is YRLVHFEADV…IRVGDPVYRV (159 aa). Mo-molybdopterin is bound by residues Ser215, Arg242, Arg276, Cys277, and Tyr321.

It depends on Mo-molybdopterin as a cofactor.

The protein localises to the mitochondrion outer membrane. Its subcellular location is the membrane. The catalysed reaction is N(omega)-hydroxy-L-arginine + 2 Fe(II)-[cytochrome b5] + 2 H(+) = L-arginine + 2 Fe(III)-[cytochrome b5] + H2O. In terms of biological role, catalyzes the reduction of N-oxygenated molecules, acting as a counterpart of cytochrome P450 and flavin-containing monooxygenases in metabolic cycles. As a component of prodrug-converting system, reduces a multitude of N-hydroxylated prodrugs particularly amidoximes, leading to increased drug bioavailability. May be involved in mitochondrial N(omega)-hydroxy-L-arginine (NOHA) reduction, regulating endogenous nitric oxide levels and biosynthesis. Postulated to cleave the N-OH bond of N-hydroxylated substrates in concert with electron transfer from NADH to cytochrome b5 reductase then to cytochrome b5, the ultimate electron donor that primes the active site for substrate reduction. This chain is Mitochondrial amidoxime-reducing component 1 (mtarc1), found in Xenopus laevis (African clawed frog).